Here is a 171-residue protein sequence, read N- to C-terminus: 3-hydroxydecanoyl-[acyl-carrier-protein] dehydratase (171 aa).

The active site involves His-70.

It belongs to the thioester dehydratase family. FabA subfamily. As to quaternary structure, homodimer.

The protein resides in the cytoplasm. The enzyme catalyses a (3R)-hydroxyacyl-[ACP] = a (2E)-enoyl-[ACP] + H2O. The catalysed reaction is (3R)-hydroxydecanoyl-[ACP] = (2E)-decenoyl-[ACP] + H2O. It catalyses the reaction (2E)-decenoyl-[ACP] = (3Z)-decenoyl-[ACP]. It functions in the pathway lipid metabolism; fatty acid biosynthesis. Its function is as follows. Necessary for the introduction of cis unsaturation into fatty acids. Catalyzes the dehydration of (3R)-3-hydroxydecanoyl-ACP to E-(2)-decenoyl-ACP and then its isomerization to Z-(3)-decenoyl-ACP. Can catalyze the dehydratase reaction for beta-hydroxyacyl-ACPs with saturated chain lengths up to 16:0, being most active on intermediate chain length. This is 3-hydroxydecanoyl-[acyl-carrier-protein] dehydratase from Shewanella baltica (strain OS223).